The primary structure comprises 157 residues: Crossover junction endodeoxyribonuclease RuvC (157 aa).

Active-site residues include Asp-7, Glu-67, and Asp-140. The Mg(2+) site is built by Asp-7, Glu-67, and Asp-140.

Belongs to the RuvC family. Homodimer which binds Holliday junction (HJ) DNA. The HJ becomes 2-fold symmetrical on binding to RuvC with unstacked arms; it has a different conformation from HJ DNA in complex with RuvA. In the full resolvosome a probable DNA-RuvA(4)-RuvB(12)-RuvC(2) complex forms which resolves the HJ. Mg(2+) serves as cofactor.

The protein resides in the cytoplasm. The enzyme catalyses Endonucleolytic cleavage at a junction such as a reciprocal single-stranded crossover between two homologous DNA duplexes (Holliday junction).. Its function is as follows. The RuvA-RuvB-RuvC complex processes Holliday junction (HJ) DNA during genetic recombination and DNA repair. Endonuclease that resolves HJ intermediates. Cleaves cruciform DNA by making single-stranded nicks across the HJ at symmetrical positions within the homologous arms, yielding a 5'-phosphate and a 3'-hydroxyl group; requires a central core of homology in the junction. The consensus cleavage sequence is 5'-(A/T)TT(C/G)-3'. Cleavage occurs on the 3'-side of the TT dinucleotide at the point of strand exchange. HJ branch migration catalyzed by RuvA-RuvB allows RuvC to scan DNA until it finds its consensus sequence, where it cleaves and resolves the cruciform DNA. The chain is Crossover junction endodeoxyribonuclease RuvC from Rickettsia akari (strain Hartford).